The primary structure comprises 284 residues: Ubiquinone biosynthesis protein COQ4, mitochondrial (284 aa).

Residues H165, D166, H169, and E181 each contribute to the Zn(2+) site.

This sequence belongs to the COQ4 family. In terms of assembly, component of a multi-subunit COQ enzyme complex, composed of at least COQ3, COQ4, COQ5, COQ6, COQ7 and COQ9. Zn(2+) is required as a cofactor.

Its subcellular location is the mitochondrion inner membrane. The enzyme catalyses a 4-hydroxy-3-methoxy-5-(all-trans-polyprenyl)benzoate + H(+) = a 2-methoxy-6-(all-trans-polyprenyl)phenol + CO2. It functions in the pathway cofactor biosynthesis; ubiquinone biosynthesis. Its function is as follows. Lyase that catalyzes the C1-decarboxylation of 4-hydroxy-3-methoxy-5-(all-trans-polyprenyl)benzoic acid into 2-methoxy-6-(all-trans-polyprenyl)phenol during ubiquinone biosynthesis. This Ajellomyces dermatitidis (strain ER-3 / ATCC MYA-2586) (Blastomyces dermatitidis) protein is Ubiquinone biosynthesis protein COQ4, mitochondrial.